A 208-amino-acid chain; its full sequence is Protein-L-isoaspartate O-methyltransferase (208 aa).

The active site involves serine 59.

Belongs to the methyltransferase superfamily. L-isoaspartyl/D-aspartyl protein methyltransferase family.

The protein localises to the cytoplasm. It carries out the reaction [protein]-L-isoaspartate + S-adenosyl-L-methionine = [protein]-L-isoaspartate alpha-methyl ester + S-adenosyl-L-homocysteine. Its function is as follows. Catalyzes the methyl esterification of L-isoaspartyl residues in peptides and proteins that result from spontaneous decomposition of normal L-aspartyl and L-asparaginyl residues. It plays a role in the repair and/or degradation of damaged proteins. The chain is Protein-L-isoaspartate O-methyltransferase from Proteus mirabilis (strain HI4320).